The chain runs to 308 residues: Cell division protein FtsX (308 aa).

The Extracellular segment spans residues 1–24; the sequence is MISRFFRHLFEALKSLKRNGWMTV. A helical transmembrane segment spans residues 25-45; it reads AAVSSVMITLTLVAIFASVIF. At 46–178 the chain is on the cytoplasmic side; it reads NTAKLATDIE…NTERLFKLAS (133 aa). A helical membrane pass occupies residues 179-199; it reads FIRVWGLGIAALLIFIAAFLI. The Extracellular segment spans residues 200 to 236; the sequence is SNTIRITIISRSREIQIMRLVGAKNSYIRGPFLLEGA. A helical transmembrane segment spans residues 237-257; sequence FIGLLGAIAPSVLVFIVYQIV. At 258–276 the chain is on the cytoplasmic side; the sequence is YQSVNKSLVGQNLSMISPD. Residues 277–297 traverse the membrane as a helical segment; that stretch reads LFSPLMIALLFVIGVFIGSLG. Residues 298 to 308 lie on the Extracellular side of the membrane; the sequence is SGISMRRFLKI.

The protein belongs to the ABC-4 integral membrane protein family. FtsX subfamily. In terms of assembly, interacts with FtsE. Interacts (via large extracellular loop) with PcsB (via N-terminal coiled coil domain). This interaction directs PcsB to equatorial and septal sites of dividing cells.

Its subcellular location is the cell membrane. In terms of biological role, part of the ABC transporter FtsEX involved in asymmetric cellular division facilitating the initiation of sporulation. Required in maintaining normal growth and cellular morphology. The chain is Cell division protein FtsX from Streptococcus pneumoniae (strain ATCC BAA-255 / R6).